Here is a 361-residue protein sequence, read N- to C-terminus: Phospho-N-acetylmuramoyl-pentapeptide-transferase (361 aa).

10 helical membrane passes run 28–48 (LAVL…IKFL), 74–94 (TMGG…LADL), 99–119 (IWIT…DDYA), 135–155 (LLLQ…TIDS), 167–187 (SLSM…IVGA), 203–223 (VPIA…GNLI), 236–256 (TGEL…FLWF), 263–283 (VFMG…ISVI), 288–308 (IVLG…IMQV), and 338–358 (KVVI…LSSL).

The protein belongs to the glycosyltransferase 4 family. MraY subfamily. The cofactor is Mg(2+).

The protein resides in the cell inner membrane. It carries out the reaction UDP-N-acetyl-alpha-D-muramoyl-L-alanyl-gamma-D-glutamyl-meso-2,6-diaminopimeloyl-D-alanyl-D-alanine + di-trans,octa-cis-undecaprenyl phosphate = di-trans,octa-cis-undecaprenyl diphospho-N-acetyl-alpha-D-muramoyl-L-alanyl-D-glutamyl-meso-2,6-diaminopimeloyl-D-alanyl-D-alanine + UMP. It functions in the pathway cell wall biogenesis; peptidoglycan biosynthesis. Its function is as follows. Catalyzes the initial step of the lipid cycle reactions in the biosynthesis of the cell wall peptidoglycan: transfers peptidoglycan precursor phospho-MurNAc-pentapeptide from UDP-MurNAc-pentapeptide onto the lipid carrier undecaprenyl phosphate, yielding undecaprenyl-pyrophosphoryl-MurNAc-pentapeptide, known as lipid I. This chain is Phospho-N-acetylmuramoyl-pentapeptide-transferase, found in Rickettsia bellii (strain RML369-C).